The following is a 567-amino-acid chain: Mitogen-activated protein kinase 16 (567 aa).

The 292-residue stretch at 25-316 (YRIEEVIGKG…AEEALADVYF (292 aa)) folds into the Protein kinase domain. ATP is bound by residues 31-39 (IGKGSYGVV) and Lys-54. The active-site Proton acceptor is Asp-151. At Thr-187 the chain carries Phosphothreonine. The short motif at 187–189 (TDY) is the TXY element. Tyr-189 carries the phosphotyrosine modification. The residue at position 192 (Thr-192) is a Phosphothreonine. 2 disordered regions span residues 428–455 (AQQSSAEVTDGLSKCSIRDERPRGADRN) and 512–567 (PAAA…SRWY). Residues 443-453 (SIRDERPRGAD) show a composition bias toward basic and acidic residues. Residues 545–567 (KPNTQYIPQKVSAAQDTAMSRWY) are compositionally biased toward polar residues.

This sequence belongs to the protein kinase superfamily. CMGC Ser/Thr protein kinase family. MAP kinase subfamily. Post-translationally, dually phosphorylated on Thr-187 and Tyr-189, which activates the enzyme.

The enzyme catalyses L-seryl-[protein] + ATP = O-phospho-L-seryl-[protein] + ADP + H(+). It carries out the reaction L-threonyl-[protein] + ATP = O-phospho-L-threonyl-[protein] + ADP + H(+). With respect to regulation, activated by threonine and tyrosine phosphorylation. The sequence is that of Mitogen-activated protein kinase 16 (MPK16) from Arabidopsis thaliana (Mouse-ear cress).